The following is a 100-amino-acid chain: A-type ATP synthase subunit F (100 aa).

The protein belongs to the V-ATPase F subunit family. As to quaternary structure, has multiple subunits with at least A(3), B(3), C, D, E, F, H, I and proteolipid K(x).

It is found in the cell membrane. In terms of biological role, component of the A-type ATP synthase that produces ATP from ADP in the presence of a proton gradient across the membrane. This chain is A-type ATP synthase subunit F, found in Methanocorpusculum labreanum (strain ATCC 43576 / DSM 4855 / Z).